The chain runs to 490 residues: MKNLDPWEAVIGLETHVQLNTKSKIFTSASTAFGDEPNTHVDPVVCGLPGTLPVLNETVLEYAVKTSLALNLNVAEHCKFDRKQYFYPDLPKNYQISQFDEPLAENGWLEVEIAEKDKETYLKKIGIERLHMEEDAGKLVHAGSDRLAGSKYSLVDYNRAGIALVEIVSKPDIRTGREASEYASEIRRTVRYLGVSDGNMQEGSLRCDVNISVRRGPDSPFGTKVEIKNMNSFSAIQKACEYEIKRQIDVYENGGEIFQETRLWDEAKQLTKSMRLKEGSSDYRYFPDPDLGPIEISKEQKDQWLNELPELPSKKRHKYVKEFGLSPYDSRVISDEVFMANFFEETVANGADPKLASNWITSDIVGYLKSNKQIFADLKLSPIYLAEMINLISEKVISGKIAKDILPELIKKNISPQKLVKEKGLAMISDSDSILPIIEDLINEFPKEVASFKEGKTKLLGFFVGQLMKKTKGKVDPKLANKLLAEKLNS.

It belongs to the GatB/GatE family. GatB subfamily. In terms of assembly, heterotrimer of A, B and C subunits.

It carries out the reaction L-glutamyl-tRNA(Gln) + L-glutamine + ATP + H2O = L-glutaminyl-tRNA(Gln) + L-glutamate + ADP + phosphate + H(+). The enzyme catalyses L-aspartyl-tRNA(Asn) + L-glutamine + ATP + H2O = L-asparaginyl-tRNA(Asn) + L-glutamate + ADP + phosphate + 2 H(+). Functionally, allows the formation of correctly charged Asn-tRNA(Asn) or Gln-tRNA(Gln) through the transamidation of misacylated Asp-tRNA(Asn) or Glu-tRNA(Gln) in organisms which lack either or both of asparaginyl-tRNA or glutaminyl-tRNA synthetases. The reaction takes place in the presence of glutamine and ATP through an activated phospho-Asp-tRNA(Asn) or phospho-Glu-tRNA(Gln). The protein is Aspartyl/glutamyl-tRNA(Asn/Gln) amidotransferase subunit B of Prochlorococcus marinus (strain MIT 9515).